The primary structure comprises 80 residues: Acyl carrier protein (80 aa).

Residues 4–79 (DEVKGQVYDI…DAINYIVEKK (76 aa)) form the Carrier domain. Position 39 is an O-(pantetheine 4'-phosphoryl)serine (Ser39).

This sequence belongs to the acyl carrier protein (ACP) family. 4'-phosphopantetheine is transferred from CoA to a specific serine of apo-ACP by AcpS. This modification is essential for activity because fatty acids are bound in thioester linkage to the sulfhydryl of the prosthetic group.

The protein resides in the cytoplasm. It functions in the pathway lipid metabolism; fatty acid biosynthesis. Functionally, carrier of the growing fatty acid chain in fatty acid biosynthesis. This chain is Acyl carrier protein, found in Chloroherpeton thalassium (strain ATCC 35110 / GB-78).